A 142-amino-acid chain; its full sequence is Mitochondrial import inner membrane translocase subunit TIM22-4 (142 aa).

4 helical membrane passes run 21 to 41, 70 to 88, 97 to 113, and 120 to 137; these read VTSG…LGAL, SCKT…ECIV, TVNT…SMSA, and ACIG…IEKF.

This sequence belongs to the Tim17/Tim22/Tim23 family.

It is found in the mitochondrion inner membrane. Its function is as follows. Essential core component of the TIM22 complex, a complex that mediates the import and insertion of multi-pass transmembrane proteins into the mitochondrial inner membrane. This chain is Mitochondrial import inner membrane translocase subunit TIM22-4 (TIM22-4), found in Arabidopsis thaliana (Mouse-ear cress).